Reading from the N-terminus, the 167-residue chain is U-scoloptoxin(08)-Er5b (167 aa).

An N-terminal signal peptide occupies residues 1 to 22; that stretch reads MKTNCEFPLLCLLIVLVANVEG. Residues 23-94 constitute a propeptide that is removed on maturation; that stretch reads EVEDTGLKMV…KRLWRNWERR (72 aa). 3 RLWRNWE repeats span residues 34–40, 61–67, and 86–92; these read RLWRNWE. Residue glutamine 95 is modified to Pyrrolidone carboxylic acid. The stretch at 107–113 is one RLWRNWE 4; approximate repeat; the sequence is ELWRNWE. Positions 112 to 118 are excised as a propeptide; that stretch reads WEDLKRR. Position 119 is a pyrrolidone carboxylic acid (glutamine 119). One copy of the RLWRNWE 5 repeat lies at 134 to 140; that stretch reads RLWRNWE. Residues 139 to 167 constitute a propeptide that is removed on maturation; the sequence is WEDNHATLRKRSADSLSRQKRLGKERGKE. Positions 147 to 167 are disordered; sequence RKRSADSLSRQKRLGKERGKE.

It belongs to the scoloptoxin-08 family. As to expression, expressed by the venom gland.

Its subcellular location is the secreted. The sequence is that of U-scoloptoxin(08)-Er5b from Ethmostigmus rubripes (Giant centipede).